The following is a 176-amino-acid chain: Large ribosomal subunit protein eL6A (176 aa).

Ser-2 carries the N-acetylserine modification. A Phosphoserine modification is found at Ser-12. A Glycyl lysine isopeptide (Lys-Gly) (interchain with G-Cter in ubiquitin) cross-link involves residue Lys-128.

The protein belongs to the eukaryotic ribosomal protein eL6 family. Component of the large ribosomal subunit (LSU). Mature yeast ribosomes consist of a small (40S) and a large (60S) subunit. The 40S small subunit contains 1 molecule of ribosomal RNA (18S rRNA) and 33 different proteins (encoded by 57 genes). The large 60S subunit contains 3 rRNA molecules (25S, 5.8S and 5S rRNA) and 46 different proteins (encoded by 81 genes). N-terminally acetylated by acetyltransferase NatA.

Its subcellular location is the cytoplasm. Functionally, component of the ribosome, a large ribonucleoprotein complex responsible for the synthesis of proteins in the cell. The small ribosomal subunit (SSU) binds messenger RNAs (mRNAs) and translates the encoded message by selecting cognate aminoacyl-transfer RNA (tRNA) molecules. The large subunit (LSU) contains the ribosomal catalytic site termed the peptidyl transferase center (PTC), which catalyzes the formation of peptide bonds, thereby polymerizing the amino acids delivered by tRNAs into a polypeptide chain. The nascent polypeptides leave the ribosome through a tunnel in the LSU and interact with protein factors that function in enzymatic processing, targeting, and the membrane insertion of nascent chains at the exit of the ribosomal tunnel. The chain is Large ribosomal subunit protein eL6A from Saccharomyces cerevisiae (strain ATCC 204508 / S288c) (Baker's yeast).